The sequence spans 532 residues: Amidophosphoribosyltransferase 3, chloroplastic (532 aa).

Residues 1–59 constitute a chloroplast transit peptide; the sequence is MAFSVEEISSILPNSLSANPRNVSQNTISPSFFKPSLKPYASKTLISLSCRRSLSPVFS. The active-site Nucleophile is the Cys-77. The Glutamine amidotransferase type-2 domain occupies 77–296; the sequence is CGVVGIHGDP…PGEIVVVDRN (220 aa). Residues Cys-313, Cys-459, Cys-511, and Cys-514 each contribute to the [4Fe-4S] cluster site.

This sequence in the C-terminal section; belongs to the purine/pyrimidine phosphoribosyltransferase family. Requires [4Fe-4S] cluster as cofactor. The cofactor is Mg(2+). In terms of tissue distribution, mostly expressed at low levels in leaves, and, to a lower extent, in cotyledons.

The protein localises to the plastid. The protein resides in the chloroplast stroma. It carries out the reaction 5-phospho-beta-D-ribosylamine + L-glutamate + diphosphate = 5-phospho-alpha-D-ribose 1-diphosphate + L-glutamine + H2O. It participates in purine metabolism; IMP biosynthesis via de novo pathway; N(1)-(5-phospho-D-ribosyl)glycinamide from 5-phospho-alpha-D-ribose 1-diphosphate: step 1/2. With respect to regulation, inhibited by the phenyltriazole acetic acid compound [5-(4-chlorophenyl)-1-isopropyl-1H-[1,2,4]triazol-3-yl]-acetic acid (DAS734), a bleaching herbicide. Repressed by AMP, ADP, ATP and GTP, and slightly by GMP. Catalyzes the first committed step of 'de novo' purine biosynthesis from glutamine. The polypeptide is Amidophosphoribosyltransferase 3, chloroplastic (ASE3) (Arabidopsis thaliana (Mouse-ear cress)).